A 99-amino-acid polypeptide reads, in one-letter code: MALTKAEMAERLFDEVGLNKREAKEFVDAFFDVLRDALEQGRQVKLSGFGNFDLRRKNQRPGRNPKTGEEIPISARTVVTFRPGQKLKERVEAYAGSGQ.

The protein belongs to the bacterial histone-like protein family. Heterodimer of an alpha and a beta chain.

In terms of biological role, this protein is one of the two subunits of integration host factor, a specific DNA-binding protein that functions in genetic recombination as well as in transcriptional and translational control. This is Integration host factor subunit alpha (ihfA) from Xanthomonas axonopodis pv. citri (strain 306).